An 88-amino-acid polypeptide reads, in one-letter code: Low calcium response locus protein S (88 aa).

It belongs to the transposase 8 family.

This Yersinia pestis protein is Low calcium response locus protein S (lcrS).